The primary structure comprises 459 residues: F-box protein At1g47340 (459 aa).

Positions 31-76 (FMVSVSLPKELILEILKRLPAKSVKRFHCVSKQWASMLSCPHFREL) constitute an F-box domain. Positions 434 to 459 (AKIEWEEEEEEDEDEDQEKEEEDQWS) are disordered. Residues 438–459 (WEEEEEEDEDEDQEKEEEDQWS) show a composition bias toward acidic residues.

This Arabidopsis thaliana (Mouse-ear cress) protein is F-box protein At1g47340.